The primary structure comprises 258 residues: Ditrans,polycis-undecaprenyl-diphosphate synthase ((2E,6E)-farnesyl-diphosphate specific) (258 aa).

The active site involves aspartate 24. Aspartate 24 contacts Mg(2+). Substrate contacts are provided by residues 25 to 28, tryptophan 29, arginine 37, histidine 41, and 69 to 71; these read GNGR and SSE. Asparagine 72 serves as the catalytic Proton acceptor. Substrate-binding positions include tryptophan 73, arginine 75, arginine 192, and 198–200; that span reads RIS. Glutamate 211 is a binding site for Mg(2+).

Belongs to the UPP synthase family. As to quaternary structure, homodimer. It depends on Mg(2+) as a cofactor.

It catalyses the reaction 8 isopentenyl diphosphate + (2E,6E)-farnesyl diphosphate = di-trans,octa-cis-undecaprenyl diphosphate + 8 diphosphate. Catalyzes the sequential condensation of isopentenyl diphosphate (IPP) with (2E,6E)-farnesyl diphosphate (E,E-FPP) to yield (2Z,6Z,10Z,14Z,18Z,22Z,26Z,30Z,34E,38E)-undecaprenyl diphosphate (di-trans,octa-cis-UPP). UPP is the precursor of glycosyl carrier lipid in the biosynthesis of bacterial cell wall polysaccharide components such as peptidoglycan and lipopolysaccharide. This Xanthomonas campestris pv. campestris (strain ATCC 33913 / DSM 3586 / NCPPB 528 / LMG 568 / P 25) protein is Ditrans,polycis-undecaprenyl-diphosphate synthase ((2E,6E)-farnesyl-diphosphate specific).